The sequence spans 420 residues: RLTYYTPQYQTKDTDILAAFRMTPQPGVPPEEAGAAVAAESSTGTWTTVWTDGLTSLDRYKGRCYDIEPVAGETNQYIAYVAYPLDLFEEGSVTNLLTSIVGNVFGFKALRALRLEDLRIPPAYSKTFLGPPHGIQVERDKLNKYGRPLLGCTIKPKLGLSAKNYGRAVYECLRGGLDFTKDDETVNSQPFIRWRDRFLFVAEALFKSQAETGEIKGHYLNATAGHCDEMIKRAVFARELGAPIVMHDYLTGGYTANTSLAFYCRDNGLLLHIHRAMHAVIDRQKNHGMHFRVLAKTLRMSGGDHIHAGTVVGKLEGEREVTLGFVDLLRDDYIEKDRSRGIYFTQDWVSMPGVLPVASGGIHVWHMPALTEIFGDDSVLQFGGGTLGHPWGNAPGAVANRVALEACVQARNEGRDLARE.

The substrate site is built by Asn-103 and Thr-153. Lys-155 (proton acceptor) is an active-site residue. Lys-157 is a substrate binding site. The Mg(2+) site is built by Lys-181, Asp-183, and Glu-184. An N6-carboxylysine modification is found at Lys-181. His-274 (proton acceptor) is an active-site residue. Residues Arg-275, His-307, and Ser-359 each coordinate substrate.

Belongs to the RuBisCO large chain family. Type I subfamily. In terms of assembly, heterohexadecamer of 8 large chains and 8 small chains; disulfide-linked. The disulfide link is formed within the large subunit homodimers. The cofactor is Mg(2+). Post-translationally, the disulfide bond which can form in the large chain dimeric partners within the hexadecamer appears to be associated with oxidative stress and protein turnover.

It is found in the plastid. Its subcellular location is the chloroplast. It catalyses the reaction 2 (2R)-3-phosphoglycerate + 2 H(+) = D-ribulose 1,5-bisphosphate + CO2 + H2O. The catalysed reaction is D-ribulose 1,5-bisphosphate + O2 = 2-phosphoglycolate + (2R)-3-phosphoglycerate + 2 H(+). Functionally, ruBisCO catalyzes two reactions: the carboxylation of D-ribulose 1,5-bisphosphate, the primary event in carbon dioxide fixation, as well as the oxidative fragmentation of the pentose substrate in the photorespiration process. Both reactions occur simultaneously and in competition at the same active site. This is Ribulose bisphosphate carboxylase large chain from Anemia mexicana (Mexican fern).